Consider the following 195-residue polypeptide: CDP-diacylglycerol--glycerol-3-phosphate 3-phosphatidyltransferase (195 aa).

The next 4 membrane-spanning stretches (helical) occupy residues 7-24 (ITVL…LFYL), 60-81 (FGAF…VLLV), 134-150 (MLAL…FTFW), and 157-173 (FLLI…LQYL).

The protein belongs to the CDP-alcohol phosphatidyltransferase class-I family.

It localises to the cell membrane. The catalysed reaction is a CDP-1,2-diacyl-sn-glycerol + sn-glycerol 3-phosphate = a 1,2-diacyl-sn-glycero-3-phospho-(1'-sn-glycero-3'-phosphate) + CMP + H(+). Its pathway is phospholipid metabolism; phosphatidylglycerol biosynthesis; phosphatidylglycerol from CDP-diacylglycerol: step 1/2. In terms of biological role, this protein catalyzes the committed step to the synthesis of the acidic phospholipids. This is CDP-diacylglycerol--glycerol-3-phosphate 3-phosphatidyltransferase (pgsA) from Pseudomonas fluorescens.